The chain runs to 457 residues: UDP-N-acetylmuramate--L-alanine ligase (457 aa).

An ATP-binding site is contributed by 118-124; the sequence is GTHGKTT.

It belongs to the MurCDEF family.

It is found in the cytoplasm. The enzyme catalyses UDP-N-acetyl-alpha-D-muramate + L-alanine + ATP = UDP-N-acetyl-alpha-D-muramoyl-L-alanine + ADP + phosphate + H(+). Its pathway is cell wall biogenesis; peptidoglycan biosynthesis. Functionally, cell wall formation. This is UDP-N-acetylmuramate--L-alanine ligase from Clostridium perfringens (strain 13 / Type A).